Here is a 102-residue protein sequence, read N- to C-terminus: RNA-binding protein Hfq (102 aa).

Residues 9 to 68 (DPFLNALRRERVPVSIYLVNGIKLQGQIESFDQFVILLKNTVSQMVYKHAISTVVPSRPV) form the Sm domain. The segment at 63-102 (VPSRPVSHHSNNAGGGTSNNYHHGSNAQGSGAQQDSEETE) is disordered. The segment covering 70–96 (HHSNNAGGGTSNNYHHGSNAQGSGAQQ) has biased composition (polar residues).

This sequence belongs to the Hfq family. In terms of assembly, homohexamer.

Functionally, RNA chaperone that binds small regulatory RNA (sRNAs) and mRNAs to facilitate mRNA translational regulation in response to envelope stress, environmental stress and changes in metabolite concentrations. Also binds with high specificity to tRNAs. The sequence is that of RNA-binding protein Hfq from Salmonella arizonae (strain ATCC BAA-731 / CDC346-86 / RSK2980).